The primary structure comprises 506 residues: Nucleoside import ATP-binding protein NupA (506 aa).

ABC transporter domains lie at 7–242 and 259–503; these read IQMI…VGRS and LEIK…VGGN. Residue 39–46 participates in ATP binding; it reads GENGAGKS.

Belongs to the ABC transporter superfamily. As to quaternary structure, the complex is composed of two ATP-binding proteins (NupA), two transmembrane proteins (NupB and NupC) and a solute-binding protein (BmpA).

It is found in the cell membrane. Part of an ABC transporter complex involved in the uptake of all common nucleosides. Responsible for energy coupling to the transport system. This is Nucleoside import ATP-binding protein NupA from Lactococcus lactis subsp. cremoris (strain MG1363).